Reading from the N-terminus, the 215-residue chain is Pyridoxine/pyridoxamine 5'-phosphate oxidase (215 aa).

Residues 9–12 (RRDY) and Lys69 each bind substrate. Residues 64–69 (RVLLLK), 79–80 (FT), Lys86, and Gln108 each bind FMN. Tyr126, Arg130, and Ser134 together coordinate substrate. FMN contacts are provided by residues 143–144 (QS) and Trp188. Residue 194 to 196 (RLH) coordinates substrate. FMN is bound at residue Arg198.

Belongs to the pyridoxamine 5'-phosphate oxidase family. Homodimer. The cofactor is FMN.

The catalysed reaction is pyridoxamine 5'-phosphate + O2 + H2O = pyridoxal 5'-phosphate + H2O2 + NH4(+). It carries out the reaction pyridoxine 5'-phosphate + O2 = pyridoxal 5'-phosphate + H2O2. Its pathway is cofactor metabolism; pyridoxal 5'-phosphate salvage; pyridoxal 5'-phosphate from pyridoxamine 5'-phosphate: step 1/1. The protein operates within cofactor metabolism; pyridoxal 5'-phosphate salvage; pyridoxal 5'-phosphate from pyridoxine 5'-phosphate: step 1/1. Functionally, catalyzes the oxidation of either pyridoxine 5'-phosphate (PNP) or pyridoxamine 5'-phosphate (PMP) into pyridoxal 5'-phosphate (PLP). The chain is Pyridoxine/pyridoxamine 5'-phosphate oxidase from Pseudomonas putida (strain W619).